A 535-amino-acid polypeptide reads, in one-letter code: MTDQTTRLPIRRALISVSDKTGILEFARELQQLGVEILSTGGTYKLLKDNGVNAVEVADYTGFAEMMDGRVKTLHPKIHGGILGRRGTDDAIMNEHGIKPIDLVAVNLYPFEATISKPGCDLPTAIENIDIGGPTMVRSAAKNHKDVAIVVNASDYAGVVEGLKAGGLTYAQRFDLMLKAFEHTAAYDGMIANYMGTIDQSKESLSTEDRSEFPRTFNSQFVKAQEMRYGENPHQSAAFYVEAKKGEASISTAIQLQGKELSFNNVADTDAALECVKSFVKPACVIVKHANPCGVAVVPEDEGGIRKAYDLAYATDTESAFGGIIAFNRELDGETAKAIVERQFVEVIIAPKISQAAREVVAAKQNVRLLECGEWPAERAAGWDFKRVNGGLLVQSRDIGMITADDLKIVTKRAPTEQEIHDLVFAWKVAKFVKSNAIVYAKNRQTIGVGAGQMSRVNSARIAAIKAEHAGLQVQGAVMASDAFFPFRDGIDNAAKVGISAVIQPGGSMRDAEVIAAADEAGIAMVFTGMRHFRH.

The MGS-like domain maps to 6–151 (TRLPIRRALI…KNHKDVAIVV (146 aa)).

The protein belongs to the PurH family.

It catalyses the reaction (6R)-10-formyltetrahydrofolate + 5-amino-1-(5-phospho-beta-D-ribosyl)imidazole-4-carboxamide = 5-formamido-1-(5-phospho-D-ribosyl)imidazole-4-carboxamide + (6S)-5,6,7,8-tetrahydrofolate. The catalysed reaction is IMP + H2O = 5-formamido-1-(5-phospho-D-ribosyl)imidazole-4-carboxamide. It functions in the pathway purine metabolism; IMP biosynthesis via de novo pathway; 5-formamido-1-(5-phospho-D-ribosyl)imidazole-4-carboxamide from 5-amino-1-(5-phospho-D-ribosyl)imidazole-4-carboxamide (10-formyl THF route): step 1/1. Its pathway is purine metabolism; IMP biosynthesis via de novo pathway; IMP from 5-formamido-1-(5-phospho-D-ribosyl)imidazole-4-carboxamide: step 1/1. In Pseudomonas entomophila (strain L48), this protein is Bifunctional purine biosynthesis protein PurH.